The primary structure comprises 153 residues: Pheromone-binding protein Gp-9 (153 aa).

An N-terminal signal peptide occupies residues 1-19; it reads MKTFVLHIFIFALVAFASA. 3 disulfide bridges follow: Cys37/Cys77, Cys73/Cys129, and Cys118/Cys138.

This sequence belongs to the PBP/GOBP family. In terms of assembly, homodimer.

It is found in the secreted. Functionally, colony queen number, a major feature of social organization, is associated with worker genotype for Gp-9. Colonies are headed by either a single reproductive queen (monogyne form) or multiple queens (polygyne form). Differences in worker Gp-9 genotypes between social forms may cause differences in workers' abilities to recognize queens and regulate their numbers. This chain is Pheromone-binding protein Gp-9, found in Solenopsis substituta (Fire ant).